A 239-amino-acid chain; its full sequence is UDP-2,3-diacylglucosamine hydrolase (239 aa).

Residues aspartate 8, histidine 10, aspartate 41, asparagine 78, and histidine 113 each coordinate Mn(2+). 78–79 (NR) lines the substrate pocket. The substrate site is built by aspartate 121, serine 159, asparagine 163, lysine 166, and histidine 194. Mn(2+)-binding residues include histidine 194 and histidine 196.

Belongs to the LpxH family. It depends on Mn(2+) as a cofactor.

The protein resides in the cell inner membrane. It carries out the reaction UDP-2-N,3-O-bis[(3R)-3-hydroxytetradecanoyl]-alpha-D-glucosamine + H2O = 2-N,3-O-bis[(3R)-3-hydroxytetradecanoyl]-alpha-D-glucosaminyl 1-phosphate + UMP + 2 H(+). Its pathway is glycolipid biosynthesis; lipid IV(A) biosynthesis; lipid IV(A) from (3R)-3-hydroxytetradecanoyl-[acyl-carrier-protein] and UDP-N-acetyl-alpha-D-glucosamine: step 4/6. Its function is as follows. Hydrolyzes the pyrophosphate bond of UDP-2,3-diacylglucosamine to yield 2,3-diacylglucosamine 1-phosphate (lipid X) and UMP by catalyzing the attack of water at the alpha-P atom. Involved in the biosynthesis of lipid A, a phosphorylated glycolipid that anchors the lipopolysaccharide to the outer membrane of the cell. This chain is UDP-2,3-diacylglucosamine hydrolase, found in Shewanella sp. (strain MR-4).